The following is a 671-amino-acid chain: DNA ligase (671 aa).

Residues 32-36 (DAEYD), 81-82 (SL), and E113 contribute to the NAD(+) site. K115 acts as the N6-AMP-lysine intermediate in catalysis. NAD(+) contacts are provided by R136, E173, K290, and K314. C408, C411, C426, and C432 together coordinate Zn(2+). The 79-residue stretch at 593–671 (EIDSPFAGKT…EAEMMRLLGE (79 aa)) folds into the BRCT domain.

The protein belongs to the NAD-dependent DNA ligase family. LigA subfamily. Mg(2+) serves as cofactor. Requires Mn(2+) as cofactor.

The catalysed reaction is NAD(+) + (deoxyribonucleotide)n-3'-hydroxyl + 5'-phospho-(deoxyribonucleotide)m = (deoxyribonucleotide)n+m + AMP + beta-nicotinamide D-nucleotide.. Functionally, DNA ligase that catalyzes the formation of phosphodiester linkages between 5'-phosphoryl and 3'-hydroxyl groups in double-stranded DNA using NAD as a coenzyme and as the energy source for the reaction. It is essential for DNA replication and repair of damaged DNA. The chain is DNA ligase from Klebsiella pneumoniae subsp. pneumoniae (strain ATCC 700721 / MGH 78578).